Consider the following 401-residue polypeptide: Pleckstrin homology-like domain family A member 1 (401 aa).

Disordered stretches follow at residues 39 to 67 (IQKRREGARPVPFSERSQEDGRGPAARSS), 190 to 222 (QQQQQQQQQQQQQQQPGQGPAEPSQPSGPAVAS), and 293 to 401 (KSTR…SNSA). A PH domain is found at 151–283 (LKEGVLEKRS…AEITLQMVQY (133 aa)). Low complexity predominate over residues 190 to 204 (QQQQQQQQQQQQQQQ). Positions 308–344 (PSQPQPQPQLQPQPQPQPQPQPQPQSQPQPQPQPKPQ) are enriched in pro residues. Positions 311–346 (PQPQPQLQPQPQPQPQPQPQPQSQPQPQPQPKPQPQ) are 15 X 2 AA repeats of P-Q. Over residues 352 to 378 (PHPHPHPHSHPHSHPHPHPHPHPHQIP) the composition is skewed to basic residues. The interval 352–389 (PHPHPHPHSHPHSHPHPHPHPHPHQIPHPHPQPHSQPH) is 14 X 2 AA repeats of P-H.

As to quaternary structure, interacts with RPL14, EIF3S7 and PABPC4. Widely expressed with highest levels in pancreas. Strongly expressed by benign melanocytic nevi, and progressively reduced expressed in primary and metastatic melanomas (at protein level).

It localises to the cytoplasm. The protein localises to the cytoplasmic vesicle. Its subcellular location is the nucleus. The protein resides in the nucleolus. In terms of biological role, seems to be involved in regulation of apoptosis. May be involved in detachment-mediated programmed cell death. May mediate apoptosis during neuronal development. May be involved in regulation of anti-apoptotic effects of IGF1. May be involved in translational regulation. This chain is Pleckstrin homology-like domain family A member 1 (PHLDA1), found in Homo sapiens (Human).